The chain runs to 185 residues: ATP synthase subunit b (185 aa).

The chain crosses the membrane as a helical span at residues 26 to 46; it reads LVLIGFAILLFIVIKFVVPMF.

It belongs to the ATPase B chain family. In terms of assembly, F-type ATPases have 2 components, F(1) - the catalytic core - and F(0) - the membrane proton channel. F(1) has five subunits: alpha(3), beta(3), gamma(1), delta(1), epsilon(1). F(0) has three main subunits: a(1), b(2) and c(10-14). The alpha and beta chains form an alternating ring which encloses part of the gamma chain. F(1) is attached to F(0) by a central stalk formed by the gamma and epsilon chains, while a peripheral stalk is formed by the delta and b chains.

The protein resides in the cell membrane. Its function is as follows. F(1)F(0) ATP synthase produces ATP from ADP in the presence of a proton or sodium gradient. F-type ATPases consist of two structural domains, F(1) containing the extramembraneous catalytic core and F(0) containing the membrane proton channel, linked together by a central stalk and a peripheral stalk. During catalysis, ATP synthesis in the catalytic domain of F(1) is coupled via a rotary mechanism of the central stalk subunits to proton translocation. In terms of biological role, component of the F(0) channel, it forms part of the peripheral stalk, linking F(1) to F(0). This is ATP synthase subunit b from Renibacterium salmoninarum (strain ATCC 33209 / DSM 20767 / JCM 11484 / NBRC 15589 / NCIMB 2235).